Here is a 331-residue protein sequence, read N- to C-terminus: Putative T-box protein 36 (331 aa).

A DNA-binding region (T-box) is located at residues 29–210; the sequence is EITKKQWNQL…MNRFSRKRKY (182 aa).

The protein localises to the nucleus. This Caenorhabditis elegans protein is Putative T-box protein 36 (tbx-36).